A 154-amino-acid polypeptide reads, in one-letter code: Periplasmic nitrate reductase, electron transfer subunit (154 aa).

Positions 1–24 are cleaved as a signal peptide; the sequence is MSMHPALRLLATVLVALGAGPAFT. The interval 27–47 is disordered; it reads APRLTGADRPMSEVAAPPLPE. Residues H68, C82, C85, H86, H103, C122, C125, and H126 each contribute to the heme c site.

It belongs to the NapB family. In terms of assembly, component of the periplasmic nitrate reductase NapAB complex composed of NapA and NapB. Post-translationally, binds 2 heme C groups per subunit.

The protein resides in the periplasm. Electron transfer subunit of the periplasmic nitrate reductase complex NapAB. Receives electrons from the membrane-anchored tetraheme c-type NapC protein and transfers these to NapA subunit, thus allowing electron flow between membrane and periplasm. Essential for periplasmic nitrate reduction with nitrate as the terminal electron acceptor. The sequence is that of Periplasmic nitrate reductase, electron transfer subunit from Cereibacter sphaeroides (Rhodobacter sphaeroides).